The sequence spans 217 residues: Zinc finger CCHC-type and RNA-binding motif-containing protein 1 (217 aa).

In terms of domain architecture, RRM spans 10-88 (STVYVSNLPF…RVIKASIAID (79 aa)). The CCHC-type zinc finger occupies 105 to 122 (SKCYECGESGHLSYACPK). The disordered stretch occupies residues 120-217 (CPKNMLGERE…YFSDEEELSD (98 aa)). Over residues 145 to 163 (PEEEIEEVEVSEEEGEDPA) the composition is skewed to acidic residues. Ser155, Ser210, and Ser216 each carry phosphoserine.

Component of the U11/U12 snRNPs that are part of the U12-type spliceosome. Interacts with ZRSR1. As to expression, expressed at higher level in heart and testis, and at lower level in cerebellum. Weakly expressed at low level in liver.

The protein localises to the nucleus. It is found in the nucleoplasm. This chain is Zinc finger CCHC-type and RNA-binding motif-containing protein 1 (Zcrb1), found in Mus musculus (Mouse).